We begin with the raw amino-acid sequence, 1152 residues long: Autotransporter adhesin BpaC (1152 aa).

Residues 1–71 form the signal peptide; that stretch reads MNRIFKSIWC…PFAEEAMAAN (71 aa). The segment at 72-1061 is surface exposed passenger domain; sequence NAGVCLTYNG…VGQLNSAVSG (990 aa). 2 disordered regions span residues 420–886 and 900–949; these read GLQG…AGAT and TATG…ESAA. The segment covering 427 to 442 has biased composition (polar residues); the sequence is ANTGTASGDNSTASGD. Over residues 443–504 the composition is skewed to low complexity; sequence NATASGTNST…ANGTNSTASG (62 aa). Residues 505-519 show a composition bias toward polar residues; the sequence is DNSTASGTNASATGE. Positions 520–588 are enriched in low complexity; that stretch reads NSTATGTDST…ANGTNSTASG (69 aa). Polar residues predominate over residues 589 to 603; the sequence is DNSTASGTNASATGE. The segment covering 604–630 has biased composition (low complexity); the sequence is NSTATGTDSTASGSNSTANGTNSTASG. Over residues 631-645 the composition is skewed to polar residues; that stretch reads DNSTASGTNASATGE. Low complexity predominate over residues 646-672; sequence NSTATGTDSTASGSNSTANGTNSTASG. Polar residues predominate over residues 673 to 687; that stretch reads DNSTASGTNASATGE. Low complexity predominate over residues 688-714; it reads NSTATGTDSTASGSNSTANGTNSTASG. Residues 715–729 are compositionally biased toward polar residues; it reads DNSTASGTNASATGE. The segment covering 730-756 has biased composition (low complexity); sequence NSTATGTDSTASGSNSTANGANSTASG. The segment covering 757-771 has biased composition (polar residues); it reads DNSTASGTNASATGE. Low complexity-rich tracts occupy residues 772–840 and 848–886; these read NSTA…TASG and TNAS…AGAT. The interval 1062–1099 is outer membrane translocation of the passenger domain; that stretch reads IRNQMDGMQGQIDTLARDAYSGIAAATALTMIPDVDPG. The tract at residues 1100–1152 is translocator domain; sequence KTLAVGIGTANFKGYQASALGATARITQNLKVKTGVSYSGSNYVWGAGMSYQW.

Belongs to the autotransporter-2 (AT-2) (TC 1.B.40) family. In terms of assembly, homotrimer.

The protein resides in the cell surface. The protein localises to the cell outer membrane. Its function is as follows. Involved in virulence. Mediates adherence to human respiratory epithelial cells. This Burkholderia pseudomallei (strain 1026b) protein is Autotransporter adhesin BpaC.